A 92-amino-acid chain; its full sequence is Small ribosomal subunit protein uS19c (92 aa).

This sequence belongs to the universal ribosomal protein uS19 family.

The protein localises to the plastid. Functionally, protein S19 forms a complex with S13 that binds strongly to the 16S ribosomal RNA. This chain is Small ribosomal subunit protein uS19c, found in Cuscuta obtusiflora (Peruvian dodder).